A 290-amino-acid polypeptide reads, in one-letter code: Fructokinase (290 aa).

Thr-130 is an ATP binding site. Zn(2+) contacts are provided by His-153, Cys-169, His-172, and Cys-175. ATP is bound by residues Pro-183 and 231-235; that span reads GVMEK.

This sequence belongs to the ROK (NagC/XylR) family. As to quaternary structure, homodimer. It depends on Mg(2+) as a cofactor.

It carries out the reaction D-fructose + ATP = D-fructose 6-phosphate + ADP + H(+). With respect to regulation, inactivated by EDTA. Inhibition by zinc ions (Potential). This Lactococcus lactis subsp. cremoris (Streptococcus cremoris) protein is Fructokinase (scrK).